The sequence spans 1423 residues: DNA-directed RNA polymerase subunit beta' (1423 aa).

Cys71, Cys73, Cys86, and Cys89 together coordinate Zn(2+). The Mg(2+) site is built by Asp461, Asp463, and Asp465. Cys815, Cys889, Cys896, and Cys899 together coordinate Zn(2+).

The protein belongs to the RNA polymerase beta' chain family. The RNAP catalytic core consists of 2 alpha, 1 beta, 1 beta' and 1 omega subunit. When a sigma factor is associated with the core the holoenzyme is formed, which can initiate transcription. Mg(2+) serves as cofactor. The cofactor is Zn(2+).

It catalyses the reaction RNA(n) + a ribonucleoside 5'-triphosphate = RNA(n+1) + diphosphate. DNA-dependent RNA polymerase catalyzes the transcription of DNA into RNA using the four ribonucleoside triphosphates as substrates. This is DNA-directed RNA polymerase subunit beta' from Actinobacillus pleuropneumoniae serotype 3 (strain JL03).